Reading from the N-terminus, the 162-residue chain is MVEQKDKYRPCVGIMLFNRQGHAFIGKRFDSDSYWQMPQGGVDDGEELEQAALRELLEEVGTNKVKVITKSKDWIYYNLPEEVIPICWNGKYSGQKQRWFLMKFCGEDEDIDINYTGHPEFKEWRWQGIDSLVASAISFKKEVYKTVIEEFSSIIKASTISS.

Positions 7–149 (KYRPCVGIML…KKEVYKTVIE (143 aa)) constitute a Nudix hydrolase domain. Positions 40–61 (GGVDDGEELEQAALRELLEEVG) match the Nudix box motif.

This sequence belongs to the Nudix hydrolase family. RppH subfamily. It depends on a divalent metal cation as a cofactor.

Accelerates the degradation of transcripts by removing pyrophosphate from the 5'-end of triphosphorylated RNA, leading to a more labile monophosphorylated state that can stimulate subsequent ribonuclease cleavage. The protein is RNA pyrophosphohydrolase of Wolbachia sp. subsp. Drosophila simulans (strain wRi).